We begin with the raw amino-acid sequence, 597 residues long: Phosphoinositide phospholipase C 4 (597 aa).

An EF-hand domain is found at 26–60 (GPVEDVRDLFEKYTEGDAHMSPEQLQKLMTEEGGE). Residues 114–257 (QNMDAPLSHY…LKEKILISTK (144 aa)) form the PI-PLC X-box domain. Residues H129 and H174 contribute to the active site. Basic and acidic residues predominate over residues 259–290 (PKEYLEANDTKEKDNGEKGKDSDEDVWGKEPE). The interval 259–324 (PKEYLEANDT…ERGSCESDTS (66 aa)) is disordered. The span at 293–309 (ISTQSDLDKVTSSVNDL) shows a compositional bias: polar residues. Residues 333 to 449 (KRLIAIHAGK…GYVKKPDFLM (117 aa)) enclose the PI-PLC Y-box domain. The C2 domain maps to 449–579 (MDASPNGQDF…QGIRAVPLFN (131 aa)).

It depends on Ca(2+) as a cofactor. Low expression in leaves, roots, flowers and siliques. Expressed in pollen and in cells of the stigma surface.

The protein resides in the cytoplasm. It is found in the cytosol. The protein localises to the cell membrane. It carries out the reaction a 1,2-diacyl-sn-glycero-3-phospho-(1D-myo-inositol-4,5-bisphosphate) + H2O = 1D-myo-inositol 1,4,5-trisphosphate + a 1,2-diacyl-sn-glycerol + H(+). Functionally, the production of the second messenger molecules diacylglycerol (DAG) and inositol 1,4,5-trisphosphate (IP3) is mediated by activated phosphatidylinositol-specific phospholipase C enzymes. The protein is Phosphoinositide phospholipase C 4 (PLC4) of Arabidopsis thaliana (Mouse-ear cress).